The following is a 109-amino-acid chain: Mitochondrial pyruvate carrier 1 (109 aa).

Ala-2 carries the post-translational modification N-acetylalanine. Over 2–20 the chain is Mitochondrial matrix; that stretch reads AGALVRKAADYVRSKDFRD. The helical transmembrane segment at 21-41 threads the bilayer; the sequence is YLMSTHFWGPVANWGLPIAAI. Residues 42-52 lie on the Mother cell cytoplasmic side of the membrane; sequence NDMKKSPEIIS. The chain crosses the membrane as a helical span at residues 53–71; that stretch reads GRMTFALCCYSLTFMRFAY. Lys-72 is modified (N6-acetyllysine). Residues 72-109 are Mitochondrial matrix-facing; it reads KVQPRNWLLFACHATNEVAQLIQGGRLIRHEMSKKASA.

As to quaternary structure, homodimer. Forms heterodimer with MPC2. The heterodimer is the more stable and dominant form.

The protein localises to the mitochondrion inner membrane. It carries out the reaction pyruvate(out) + H(+)(out) = pyruvate(in) + H(+)(in). Functionally, mediates the uptake of pyruvate into mitochondria. The sequence is that of Mitochondrial pyruvate carrier 1 (MPC1) from Bos taurus (Bovine).